A 518-amino-acid chain; its full sequence is Probable G-protein coupled receptor Mth-like 2 (518 aa).

The N-terminal stretch at 1-26 (MIASSKMLLSASILIYFLLNLQSSSA) is a signal peptide. The Extracellular portion of the chain corresponds to 27–220 (EIADCSFYDT…CLILPSRTGQ (194 aa)). Disulfide bonds link Cys31–Cys85, Cys87–Cys92, Cys96–Cys190, Cys97–Cys108, and Cys152–Cys211. Asn47 is a glycosylation site (N-linked (GlcNAc...) asparagine). Residues Asn111, Asn125, and Asn201 are each glycosylated (N-linked (GlcNAc...) asparagine). A helical transmembrane segment spans residues 221–241 (TVVMITSLICLVLTIAVYLCV). Residues 242–250 (KKLMNLEGK) lie on the Cytoplasmic side of the membrane. A helical membrane pass occupies residues 251-271 (CFICYMMCLFFGYLFLLLDLW). At 272–279 (ELSLDFCK) the chain is on the extracellular side. A helical membrane pass occupies residues 280–300 (AAGFLGYFFVMAAFFWLSIIS). The Cytoplasmic segment spans residues 301–321 (RHYWKCLTNPCASMNIRSERA). Residues 322–342 (FLLYSCFAWAMPLALTGVTYL) form a helical membrane-spanning segment. Topologically, residues 343 to 371 (ADNVVNNEEWQPRVGDEGHCWIYTKSWSA) are extracellular. A helical transmembrane segment spans residues 372–392 (MVYFYGPMVLLILFNITMFVL). Residues 393 to 426 (TAKHIIDSKRTLRKIARNEGRIQKLNSDKQNYTQ) lie on the Cytoplasmic side of the membrane. A helical membrane pass occupies residues 427-447 (FLLLFTVMGMSWSFEIFSYLV). At 448 to 455 (QREKLWVN) the chain is on the extracellular side. A helical transmembrane segment spans residues 456-476 (IFLVADYFNWSQGVIIFVLFI). Topologically, residues 477–518 (LRRKTLVLFKKQIFPKQRAFSRSATQSTIESISQTKRHFNMT) are cytoplasmic.

It belongs to the G-protein coupled receptor 2 family. Mth subfamily.

It is found in the cell membrane. In Drosophila melanogaster (Fruit fly), this protein is Probable G-protein coupled receptor Mth-like 2 (mthl2).